The sequence spans 255 residues: 4-hydroxy-tetrahydrodipicolinate reductase (255 aa).

NAD(+) is bound by residues 8 to 13 (GANGRV), 88 to 90 (GTT), and 112 to 115 (ATNM). The active-site Proton donor/acceptor is the histidine 144. Histidine 145 contributes to the (S)-2,3,4,5-tetrahydrodipicolinate binding site. Residue lysine 148 is the Proton donor of the active site. 154-155 (GT) contacts (S)-2,3,4,5-tetrahydrodipicolinate.

The protein belongs to the DapB family.

It is found in the cytoplasm. It carries out the reaction (S)-2,3,4,5-tetrahydrodipicolinate + NAD(+) + H2O = (2S,4S)-4-hydroxy-2,3,4,5-tetrahydrodipicolinate + NADH + H(+). It catalyses the reaction (S)-2,3,4,5-tetrahydrodipicolinate + NADP(+) + H2O = (2S,4S)-4-hydroxy-2,3,4,5-tetrahydrodipicolinate + NADPH + H(+). Its pathway is amino-acid biosynthesis; L-lysine biosynthesis via DAP pathway; (S)-tetrahydrodipicolinate from L-aspartate: step 4/4. Functionally, catalyzes the conversion of 4-hydroxy-tetrahydrodipicolinate (HTPA) to tetrahydrodipicolinate. In Sulfurimonas denitrificans (strain ATCC 33889 / DSM 1251) (Thiomicrospira denitrificans (strain ATCC 33889 / DSM 1251)), this protein is 4-hydroxy-tetrahydrodipicolinate reductase.